Reading from the N-terminus, the 547-residue chain is Undecaprenyl phosphate-alpha-4-amino-4-deoxy-L-arabinose arabinosyl transferase (547 aa).

The next 11 helical transmembrane spans lie at 1–21, 83–103, 111–131, 174–194, 205–225, 253–273, 286–306, 311–331, 346–366, 378–398, and 408–428; these read MKLT…LPLD, FASA…ALQL, FLAG…TYSV, FLTK…PYVI, FGPL…IAVH, APFW…LGLL, ISPE…FFSV, LLTY…ASAV, AWLN…LALS, GALA…FIQL, and SALC…QSLI.

Belongs to the glycosyltransferase 83 family.

Its subcellular location is the cell inner membrane. The enzyme catalyses 4-amino-4-deoxy-alpha-L-arabinopyranosyl di-trans,octa-cis-undecaprenyl phosphate + lipid IVA = lipid IIA + di-trans,octa-cis-undecaprenyl phosphate.. Its pathway is lipopolysaccharide metabolism; 4-amino-4-deoxy-beta-L-arabinose-lipid A biosynthesis. Catalyzes the transfer of the L-Ara4N moiety of the glycolipid undecaprenyl phosphate-alpha-L-Ara4N to lipid A. The modified arabinose is attached to lipid A and is required for resistance to polymyxin and cationic antimicrobial peptides. The chain is Undecaprenyl phosphate-alpha-4-amino-4-deoxy-L-arabinose arabinosyl transferase from Aeromonas salmonicida (strain A449).